Consider the following 449-residue polypeptide: Glucose-6-phosphate isomerase (449 aa).

E291 acts as the Proton donor in catalysis. Catalysis depends on residues H312 and K426.

The protein belongs to the GPI family.

It localises to the cytoplasm. It catalyses the reaction alpha-D-glucose 6-phosphate = beta-D-fructose 6-phosphate. Its pathway is carbohydrate biosynthesis; gluconeogenesis. It functions in the pathway carbohydrate degradation; glycolysis; D-glyceraldehyde 3-phosphate and glycerone phosphate from D-glucose: step 2/4. Catalyzes the reversible isomerization of glucose-6-phosphate to fructose-6-phosphate. The polypeptide is Glucose-6-phosphate isomerase (Streptococcus pneumoniae (strain CGSP14)).